We begin with the raw amino-acid sequence, 319 residues long: MAKIKNVAIQMDHVSGINIAGDSTFAISLEAQARGYRLFHYTPERLSMRDGKIYATVEQMELRDIKGDHFSLSEPERVDLSTMDVIHLRQDPPFDMAYITSTHLLERIHPKTLVVNDPAWVRNSPEKIFVTEFADLMPKTLITKDVSEIARFRNEMGDIILKPLYGNGGAGVFHSARDDRNFSSLLEMFGQMFREPYIAQEYLPDVRKGDKRILLVDGEPVGAINRVPAENDARSNMHAGGRPEPTELTAREQEICRRIGPALRERGFLFVGIDVIGDYMTEINVTSPTGIREVRKFGGADVASLLWDAIEKKRDAQDF.

The 185-residue stretch at 127-311 folds into the ATP-grasp domain; that stretch reads KIFVTEFADL…VASLLWDAIE (185 aa). Residue 153 to 209 participates in ATP binding; sequence RNEMGDIILKPLYGNGGAGVFHSARDDRNFSSLLEMFGQMFREPYIAQEYLPDVRKG. 2 residues coordinate Mg(2+): Glu-282 and Asn-284.

It belongs to the prokaryotic GSH synthase family. Requires Mg(2+) as cofactor. The cofactor is Mn(2+).

The enzyme catalyses gamma-L-glutamyl-L-cysteine + glycine + ATP = glutathione + ADP + phosphate + H(+). It participates in sulfur metabolism; glutathione biosynthesis; glutathione from L-cysteine and L-glutamate: step 2/2. This is Glutathione synthetase from Agrobacterium fabrum (strain C58 / ATCC 33970) (Agrobacterium tumefaciens (strain C58)).